We begin with the raw amino-acid sequence, 556 residues long: Hydroxylamine reductase (556 aa).

[4Fe-4S] cluster contacts are provided by Cys5, Cys8, Cys17, and Cys23. Hybrid [4Fe-2O-2S] cluster contacts are provided by His249, Glu273, Cys317, Cys409, Cys437, Cys462, Glu497, and Lys499. Cys409 is subject to Cysteine persulfide.

The protein belongs to the HCP family. The cofactor is [4Fe-4S] cluster. Requires hybrid [4Fe-2O-2S] cluster as cofactor.

It localises to the cytoplasm. The catalysed reaction is A + NH4(+) + H2O = hydroxylamine + AH2 + H(+). In terms of biological role, catalyzes the reduction of hydroxylamine to form NH(3) and H(2)O. The polypeptide is Hydroxylamine reductase (Kosmotoga olearia (strain ATCC BAA-1733 / DSM 21960 / TBF 19.5.1)).